We begin with the raw amino-acid sequence, 203 residues long: ATP phosphoribosyltransferase (203 aa).

The protein belongs to the ATP phosphoribosyltransferase family. Short subfamily.

Its subcellular location is the cytoplasm. It carries out the reaction 1-(5-phospho-beta-D-ribosyl)-ATP + diphosphate = 5-phospho-alpha-D-ribose 1-diphosphate + ATP. The protein operates within amino-acid biosynthesis; L-histidine biosynthesis; L-histidine from 5-phospho-alpha-D-ribose 1-diphosphate: step 1/9. Functionally, catalyzes the condensation of ATP and 5-phosphoribose 1-diphosphate to form N'-(5'-phosphoribosyl)-ATP (PR-ATP). Has a crucial role in the pathway because the rate of histidine biosynthesis seems to be controlled primarily by regulation of HisG enzymatic activity. The sequence is that of ATP phosphoribosyltransferase from Thermococcus kodakarensis (strain ATCC BAA-918 / JCM 12380 / KOD1) (Pyrococcus kodakaraensis (strain KOD1)).